Consider the following 374-residue polypeptide: MKSLSMLIKPASSNCNLRCTYCFYYDICNNREIKSFGMMKLNLLETIVKRAFNEAEQNCTFAFQGGEPTLVGIDFYREFINFVKKYNTRNINVFYSIQTNGTTINEDWAKFFKENNFLVGISLDGTKEIHDKYRLDANKKGSFNKIMTNIKILNRYKVEYNILTVVNKNTSRHIDKIYKFFKKQDFRFLQFIPCLDPINDPRESHPYSLNPKDYETFLNKLFDLWFKDFLDGRFVSIRYFDDLLSILLGNNPKSCCMNGFCSCEFVIESDGSVYPCDFYVLDEYKIGYIEEKTFSELFNSNVTKNFIDSSLNHDVKCKNCNWYPLCRSGCRRNKEPNFPNGTNDNIFCESFKSFFEKNISKLTYVAKTLAYRQH.

The Radical SAM core domain occupies 1 to 227 (MKSLSMLIKP…LNKLFDLWFK (227 aa)). Residues Cys-15 and Cys-19 each contribute to the [4Fe-4S] cluster site. Tyr-21 contributes to the S-adenosyl-L-methionine binding site. Residue Cys-22 coordinates [4Fe-4S] cluster. S-adenosyl-L-methionine is bound by residues Gly-66, Ser-122, Arg-134, and Leu-195. The [4Fe-4S] cluster site is built by Cys-255, Cys-261, and Cys-276. Residue Asp-277 is the Proton acceptor of the active site. Positions 317, 320, 326, 330, and 348 each coordinate [4Fe-4S] cluster.

The protein belongs to the radical SAM superfamily. Anaerobic sulfatase-maturating enzyme family. The cofactor is [4Fe-4S] cluster.

The catalysed reaction is L-cysteinyl-[sulfatase] + S-adenosyl-L-methionine + H2O = 3-oxo-L-alanyl-[sulfatase] + hydrogen sulfide + 5'-deoxyadenosine + L-methionine + 2 H(+). The protein operates within protein modification; sulfatase oxidation. Involved in 'Cys-type' sulfatase maturation under anaerobic conditions. Catalyzes the post-translational modification of cysteine into 3-oxoalanine (also known as C(alpha)-formylglycine (FGly)), by a free radical chemical mechanism initiated via the reductive cleavage of S-adenosyl-L-methionine (SAM). The chain is Cysteine-type anaerobic sulfatase-maturating enzyme from Clostridium novyi (strain NT).